We begin with the raw amino-acid sequence, 1195 residues long: Zinc finger and BTB domain-containing protein 38 (1195 aa).

The BTB domain maps to 33–100 (CDVTIIVEDT…IYSSTVVVKR (68 aa)). Residue Lys43 forms a Glycyl lysine isopeptide (Lys-Gly) (interchain with G-Cter in SUMO2) linkage. Ser130 is modified (phosphoserine). Residues Lys145, Lys148, Lys151, and Lys259 each participate in a glycyl lysine isopeptide (Lys-Gly) (interchain with G-Cter in SUMO2) cross-link. Residues 264-334 (RKPKTFSIPQ…QSSDVPGPPA (71 aa)) are disordered. The span at 270 to 280 (SIPQDSDSATE) shows a compositional bias: polar residues. Residues 300-523 (PAAVLTRSKS…RRYQCIFCLE (224 aa)) are interaction with CBFA2T3. At Ser309 the chain carries Phosphoserine. Residues 314-323 (GDVHFSREDE) are compositionally biased toward basic and acidic residues. A C2H2-type 1 zinc finger spans residues 342 to 364 (YNCSCCSKAFDSSTLLSAHMQLH). A C2H2-type 2; degenerate zinc finger spans residues 371–395 (LVCKYCNKQFTTLNRLDRHEQICMR). C2H2-type zinc fingers lie at residues 460–482 (YSCV…ANVH), 488–510 (YPCH…EIWH), and 516–539 (YQCI…KSFH). Residues Lys550, Lys557, Lys754, Lys758, Lys763, Lys804, Lys814, Lys821, Lys842, Lys850, and Lys857 each participate in a glycyl lysine isopeptide (Lys-Gly) (interchain with G-Cter in SUMO2) cross-link. A disordered region spans residues 745-804 (SDPAVSQSLKDDSKPEPDKVGRFASRPKSIKEKKKTTSHTRGEIPEESNYVADPGGSLSK). Over residues 753–765 (LKDDSKPEPDKVG) the composition is skewed to basic and acidic residues. Disordered stretches follow at residues 871-891 (QEEP…PLGL) and 903-922 (FDDA…YYNY). Residues Lys923, Lys964, Lys969, Lys977, Lys981, Lys991, Lys1017, and Lys1026 each participate in a glycyl lysine isopeptide (Lys-Gly) (interchain with G-Cter in SUMO2) cross-link. 5 consecutive C2H2-type zinc fingers follow at residues 1010 to 1032 (YACE…MRCH), 1038 to 1060 (YQCK…ERIH), 1066 to 1088 (FVCQ…ERIH), 1094 to 1116 (YHCQ…EQRH), and 1125 to 1147 (YACF…QKKH). Residues Lys1109, Lys1132, Lys1135, Lys1150, and Lys1183 each participate in a glycyl lysine isopeptide (Lys-Gly) (interchain with G-Cter in SUMO2) cross-link.

Interacts with CBFA2T3. Interacts with ZBTB4. Interacts with RBBP6. In terms of processing, ubiquitinated by RBBP6; leading to its degradation by the proteasome.

It localises to the nucleus. The protein localises to the chromosome. Transcriptional regulator with bimodal DNA-binding specificity. Binds with a higher affinity to methylated CpG dinucleotides in the consensus sequence 5'-CGCG-3' but can also bind to E-box elements (5'-CACGTG-3'). Can also bind specifically to a single methyl-CpG pair. Represses transcription in a methyl-CpG-dependent manner. Plays an important role in regulating DNA replication and common fragile sites (CFS) stability in a RBBP6- and MCM10-dependent manner; represses expression of MCM10 which plays an important role in DNA-replication. Acts as a transcriptional activator. May be involved in the differentiation and/or survival of late postmitotic neurons. This Homo sapiens (Human) protein is Zinc finger and BTB domain-containing protein 38.